A 473-amino-acid chain; its full sequence is Putative malate dehydrogenase 1B (473 aa).

Belongs to the LDH/MDH superfamily. MDH type 2 family.

The chain is Putative malate dehydrogenase 1B (MDH1B) from Bos taurus (Bovine).